A 314-amino-acid polypeptide reads, in one-letter code: Homoserine O-acetyltransferase (314 aa).

Residue Cys142 is the Acyl-thioester intermediate of the active site. The substrate site is built by Lys163 and Ser192. The active-site Proton acceptor is the His235. The active site involves Glu237. Arg249 provides a ligand contact to substrate.

This sequence belongs to the MetA family.

It localises to the cytoplasm. The catalysed reaction is L-homoserine + acetyl-CoA = O-acetyl-L-homoserine + CoA. Its pathway is amino-acid biosynthesis; L-methionine biosynthesis via de novo pathway; O-acetyl-L-homoserine from L-homoserine: step 1/1. Transfers an acetyl group from acetyl-CoA to L-homoserine, forming acetyl-L-homoserine. This Streptococcus pneumoniae serotype 19F (strain G54) protein is Homoserine O-acetyltransferase.